Consider the following 249-residue polypeptide: MTIKPIYQRILLKLSGEALQGKNNFGIDTNALNRIVQEIKELIKFKINIGIVIGGGNLFRGTLLAHLGIQRVVCDHMGMLATVINSLAIRNTMLHININANILSAIPLDGICELYNLDKAIDLLEKNIVVIFAAGIGNPFFTTDSAACLRGLEIGADVVLKATKVDGVFSADPKIDPDAILYDQLNYKDILKQELKIMDLTALTLAHDNHLPIRVFNINKPGALWRVVMGKKEGTLIYTPKINKVNYNI.

13-16 (KLSG) is an ATP binding site. A UMP-binding site is contributed by Gly-55. 2 residues coordinate ATP: Gly-56 and Arg-60. UMP-binding positions include Asp-75 and 136 to 143 (IGNPFFTT). ATP is bound by residues Thr-163, Phe-169, and Asp-172.

It belongs to the UMP kinase family. In terms of assembly, homohexamer.

Its subcellular location is the cytoplasm. It catalyses the reaction UMP + ATP = UDP + ADP. The protein operates within pyrimidine metabolism; CTP biosynthesis via de novo pathway; UDP from UMP (UMPK route): step 1/1. With respect to regulation, inhibited by UTP. In terms of biological role, catalyzes the reversible phosphorylation of UMP to UDP. This chain is Uridylate kinase, found in Baumannia cicadellinicola subsp. Homalodisca coagulata.